The chain runs to 166 residues: Interleukin-2 (166 aa).

The first 20 residues, 1-20 (MYSMQLASCVTLTLVLLVNS), serve as a signal peptide directing secretion. T23 carries O-linked (GalNAc...) threonine glycosylation. A disulfide bridge connects residues C89 and C137.

This sequence belongs to the IL-2 family.

It localises to the secreted. Cytokine produced by activated CD4-positive helper T-cells and to a lesser extend activated CD8-positive T-cells and natural killer (NK) cells that plays pivotal roles in the immune response and tolerance. Binds to a receptor complex composed of either the high-affinity trimeric IL-2R (IL2RA/CD25, IL2RB/CD122 and IL2RG/CD132) or the low-affinity dimeric IL-2R (IL2RB and IL2RG). Interaction with the receptor leads to oligomerization and conformation changes in the IL-2R subunits resulting in downstream signaling starting with phosphorylation of JAK1 and JAK3. In turn, JAK1 and JAK3 phosphorylate the receptor to form a docking site leading to the phosphorylation of several substrates including STAT5. This process leads to activation of several pathways including STAT, phosphoinositide-3-kinase/PI3K and mitogen-activated protein kinase/MAPK pathways. Functions as a T-cell growth factor and can increase NK-cell cytolytic activity as well. Promotes strong proliferation of activated B-cells and subsequently immunoglobulin production. Plays a pivotal role in regulating the adaptive immune system by controlling the survival and proliferation of regulatory T-cells, which are required for the maintenance of immune tolerance. Moreover, participates in the differentiation and homeostasis of effector T-cell subsets, including Th1, Th2, Th17 as well as memory CD8-positive T-cells. This Mus spretus (Western Mediterranean mouse) protein is Interleukin-2 (Il2).